The sequence spans 484 residues: Carbohydrate sulfotransferase 7 (484 aa).

The Cytoplasmic segment spans residues 1–12 (MKGRRRRRREYC). The helical; Signal-anchor for type II membrane protein transmembrane segment at 13–33 (KFTLLLALYTLLLLLVPSVLD) threads the bilayer. Over 34–484 (SHSEQDKGRN…PLETKANWAV (451 aa)) the chain is Lumenal. The tract at residues 71-90 (RSLAEGNPDRSPGSPGNLSA) is disordered. Asparagine 87 carries N-linked (GlcNAc...) asparagine glycosylation. Position 108–114 (108–114 (WRTGSSF)) interacts with 3'-phosphoadenylyl sulfate. Residue asparagine 184 is glycosylated (N-linked (GlcNAc...) asparagine). Position 276 to 284 (276 to 284 (RDPRAVHNS)) interacts with 3'-phosphoadenylyl sulfate. Asparagine 405 carries N-linked (GlcNAc...) asparagine glycosylation. Serine 460 bears the Phosphoserine mark. Positions 460–473 (SGDERDRKTVREGE) are enriched in basic and acidic residues. The tract at residues 460–484 (SGDERDRKTVREGETPLETKANWAV) is disordered.

This sequence belongs to the sulfotransferase 1 family. Gal/GlcNAc/GalNAc subfamily. In terms of tissue distribution, widely expressed. Highly expressed in kidney. Expressed at lower level in heart, lung and liver.

The protein localises to the golgi apparatus membrane. The catalysed reaction is chondroitin beta-D-glucuronate + n 3'-phosphoadenylyl sulfate = chondroitin 6'-sulfate + n adenosine 3',5'-bisphosphate + n H(+). In terms of biological role, sulfotransferase that utilizes 3'-phospho-5'-adenylyl sulfate (PAPS) as sulfonate donor to catalyze the transfer of sulfate to position 6 of non-reducing N-acetylglucosamine (GlcNAc) residues. Preferentially acts on mannose-linked GlcNAc. Also able to catalyze the transfer of sulfate to position 6 of the N-acetylgalactosamine (GalNAc) residue of chondroitin. Also acts on core 2 mucin-type oligosaccharide and N-acetyllactosamine oligomer with a lower efficiency. Has weak or no activity toward keratan sulfate and oligosaccharides containing the Galbeta1-4GlcNAc. Catalyzes 6-O-sulfation of beta-benzyl GlcNAc but not alpha- or beta-benzyl GalNAc. This Mus musculus (Mouse) protein is Carbohydrate sulfotransferase 7 (Chst7).